The chain runs to 147 residues: Large ribosomal subunit protein uL22c (147 aa).

The protein belongs to the universal ribosomal protein uL22 family. In terms of assembly, part of the 50S ribosomal subunit.

The protein localises to the plastid. In terms of biological role, this protein binds specifically to 23S rRNA. The globular domain of the protein is located near the polypeptide exit tunnel on the outside of the subunit, while an extended beta-hairpin is found that lines the wall of the exit tunnel in the center of the 70S ribosome. The chain is Large ribosomal subunit protein uL22c (rpl22) from Cuscuta gronovii (Common dodder).